We begin with the raw amino-acid sequence, 359 residues long: Protein-arginine kinase (359 aa).

A Phosphagen kinase C-terminal domain is found at 25–257; sequence IVISSRVRLA…QQVIEQERML (233 aa). ATP contacts are provided by residues 28–32, histidine 93, arginine 128, 179–183, and 210–215; these read SSRVR, RASLM, and RGIYGE. Residues 340–345 carry the RDXXRA motif of the pArg binding pocket involved in allosteric regulation motif; that stretch reads RDAKRA.

It belongs to the ATP:guanido phosphotransferase family.

The catalysed reaction is L-arginyl-[protein] + ATP = N(omega)-phospho-L-arginyl-[protein] + ADP + H(+). With respect to regulation, appears to be allosterically activated by the binding of pArg-containing polypeptides to the pArg-binding pocket localized in the C-terminal domain of McsB. In terms of biological role, catalyzes the specific phosphorylation of arginine residues in proteins. This chain is Protein-arginine kinase, found in Syntrophomonas wolfei subsp. wolfei (strain DSM 2245B / Goettingen).